Reading from the N-terminus, the 848-residue chain is Adenylate cyclase (848 aa).

The segment at 1–535 is catalytic; that stretch reads MYLYIETLKQ…DISHHFPLRL (535 aa). The tract at residues 541 to 848 is regulatory; sequence KALYSPCEIR…SQPAQQFQLH (308 aa).

This sequence belongs to the adenylyl cyclase class-1 family.

It is found in the cytoplasm. It carries out the reaction ATP = 3',5'-cyclic AMP + diphosphate. Its activity is regulated as follows. The regulatory domain is involved in the regulation of cyclase activity by the carbon source. This Yersinia intermedia protein is Adenylate cyclase (cya).